The primary structure comprises 394 residues: NAD(P)H-quinone oxidoreductase subunit H (394 aa).

Belongs to the complex I 49 kDa subunit family. As to quaternary structure, NDH-1 can be composed of about 15 different subunits; different subcomplexes with different compositions have been identified which probably have different functions.

The protein resides in the cellular thylakoid membrane. The catalysed reaction is a plastoquinone + NADH + (n+1) H(+)(in) = a plastoquinol + NAD(+) + n H(+)(out). It catalyses the reaction a plastoquinone + NADPH + (n+1) H(+)(in) = a plastoquinol + NADP(+) + n H(+)(out). In terms of biological role, NDH-1 shuttles electrons from an unknown electron donor, via FMN and iron-sulfur (Fe-S) centers, to quinones in the respiratory and/or the photosynthetic chain. The immediate electron acceptor for the enzyme in this species is believed to be plastoquinone. Couples the redox reaction to proton translocation, and thus conserves the redox energy in a proton gradient. Cyanobacterial NDH-1 also plays a role in inorganic carbon-concentration. This chain is NAD(P)H-quinone oxidoreductase subunit H, found in Prochlorococcus marinus (strain MIT 9211).